Here is a 139-residue protein sequence, read N- to C-terminus: Probable disulfide formation protein C 2 (139 aa).

A helical transmembrane segment spans residues 6–25; sequence KYHIAIAWMIATSAMLISLF. A disulfide bond links C35 and C38. Transmembrane regions (helical) follow at residues 40–59 and 66–83; these read YQRMAMYPLVLILGIGMYRK and YAFPFTCIGLILSVYQIT. A disulfide bridge connects residues C95 and C101. Residues 110-133 form a helical membrane-spanning segment; that stretch reads GFISIPMLSFIGFLVIIILIYIES.

It belongs to the DsbB family. BdbC subfamily.

Its subcellular location is the cell membrane. Its function is as follows. Required for disulfide bond formation in some proteins. The chain is Probable disulfide formation protein C 2 (bdbC2) from Bacillus cereus (strain ATCC 10987 / NRS 248).